Consider the following 260-residue polypeptide: Hemin import ATP-binding protein HmuV (260 aa).

Residues Leu-6–Asp-242 form the ABC transporter domain. Gly-38–Ser-45 is a binding site for ATP.

The protein belongs to the ABC transporter superfamily. Heme (hemin) importer (TC 3.A.1.14.5) family. As to quaternary structure, the complex is composed of two ATP-binding proteins (HmuV), two transmembrane proteins (HmuU) and a solute-binding protein (HmuT).

It is found in the cell inner membrane. In terms of biological role, part of the ABC transporter complex HmuTUV involved in hemin import. Responsible for energy coupling to the transport system. In Sodalis glossinidius (strain morsitans), this protein is Hemin import ATP-binding protein HmuV.